The primary structure comprises 700 residues: E3 ubiquitin-protein ligase SspH1 (700 aa).

The interval 1–395 is interaction with target proteins; sequence MFNIRNTQPS…HSGIRIHFDM (395 aa). LRR repeat units follow at residues 217-238, 239-257, 258-279, 280-297, 298-319, 320-337, 338-360, and 361-381; these read HITT…PEGL, RELE…SLPQ, GLQK…PPGL, GDLA…EMPP, ALRE…PSGL, QKLW…EMSP, GLQE…TGLS, and SAAR…QALR. The segment at 396–403 is linker; that stretch reads AGPSVPRE. Positions 404 to 700 are E3 ubiquitin-protein ligase catalytic domain; that stretch reads ARALHLAVAD…SYLTARWRLN (297 aa). Residues 406-700 enclose the NEL domain; sequence ALHLAVADWL…SYLTARWRLN (295 aa). Cysteine 492 functions as the Glycyl thioester intermediate in the catalytic mechanism.

This sequence belongs to the LRR-containing bacterial E3 ligase family. Interacts (via leucine-rich repeat region) with host PKN1 (via the second REM repeat). In terms of processing, ubiquitinated in the presence of host E1 ubiquitin-activating enzyme, E2 ubiquitin-conjugating enzyme and ubiquitin.

The protein resides in the secreted. The protein localises to the host cytoplasm. Its subcellular location is the host nucleus. It catalyses the reaction S-ubiquitinyl-[E2 ubiquitin-conjugating enzyme]-L-cysteine + [acceptor protein]-L-lysine = [E2 ubiquitin-conjugating enzyme]-L-cysteine + N(6)-ubiquitinyl-[acceptor protein]-L-lysine.. With respect to regulation, exists in an autoinhibited state in the absence of substrate protein, due to interactions of the leucine-rich repeat domain with the catalytic domain. Is activated upon binding to a substrate protein. Effector proteins function to alter host cell physiology and promote bacterial survival in host tissues. This protein is an E3 ubiquitin-protein ligase that interferes with the host's ubiquitination pathway and targets host proteins for proteasomal degradation. Can ubiquitinate ubiquitin, giving rise to polyubiquitin chains (in vitro). Polyubiquitinates host PKN1, leading to its proteasomal degradation. Down-modulates production of host pro-inflammatory cytokines by inhibiting NF-kappa-B-dependent gene expression; this depends only partially on its E3 ubiquitin-protein ligase activity. The chain is E3 ubiquitin-protein ligase SspH1 (sspH1) from Salmonella typhimurium (strain 14028s / SGSC 2262).